The chain runs to 64 residues: MARKDQISHRGPLSGNNRSHALNATKRKFNLNLQQITLKTASGKKIRLKVSAKTKKILRKWGHV.

Positions M1–N23 are disordered.

It belongs to the bacterial ribosomal protein bL28 family.

The sequence is that of Large ribosomal subunit protein bL28 from Mesomycoplasma hyopneumoniae (strain 232) (Mycoplasma hyopneumoniae).